We begin with the raw amino-acid sequence, 620 residues long: uncharacterized protein (620 aa).

Belongs to the chlamydial CPn_0512/CT_425/TC_0708 family.

This is an uncharacterized protein from Chlamydia pneumoniae (Chlamydophila pneumoniae).